The following is a 621-amino-acid chain: Chaperone protein HscA homolog (621 aa).

The protein belongs to the heat shock protein 70 family.

Functionally, chaperone involved in the maturation of iron-sulfur cluster-containing proteins. Has a low intrinsic ATPase activity which is markedly stimulated by HscB. This Cupriavidus taiwanensis (strain DSM 17343 / BCRC 17206 / CCUG 44338 / CIP 107171 / LMG 19424 / R1) (Ralstonia taiwanensis (strain LMG 19424)) protein is Chaperone protein HscA homolog.